Reading from the N-terminus, the 436-residue chain is Suppressor of cytokine signaling 4 (436 aa).

The tract at residues 1-25 (MAENNSKNVDVRPKTSRSRSADRKD) is disordered. Residues 9-25 (VDVRPKTSRSRSADRKD) show a composition bias toward basic and acidic residues. Positions 283-378 (CYWGVMDKYA…FFEPLLSTPL (96 aa)) constitute an SH2 domain. Residues 373–422 (LLSTPLIRTFPFSLQHICRTVICNCTTYDGIDALPIPSPMKLYLKEYHYK) form the SOCS box domain.

It functions in the pathway protein modification; protein ubiquitination. Functionally, SOCS family proteins form part of a classical negative feedback system that regulates cytokine signal transduction. Substrate-recognition component of a SCF-like ECS (Elongin BC-CUL2/5-SOCS-box protein) E3 ubiquitin-protein ligase complex which mediates the ubiquitination and subsequent proteasomal degradation of target proteins. Inhibits EGF signaling by mediating the degradation of the Tyr-phosphorylated EGF receptor/EGFR. This chain is Suppressor of cytokine signaling 4 (Socs4), found in Mus musculus (Mouse).